A 129-amino-acid polypeptide reads, in one-letter code: Integration host factor subunit alpha (129 aa).

Residues 87–129 are disordered; the sequence is SALNGEAPPEDHAEIDAREEAAADAAEARGEDFDEEGMEDMEG. Over residues 95–117 the composition is skewed to basic and acidic residues; sequence PEDHAEIDAREEAAADAAEARGE. Residues 118–129 are compositionally biased toward acidic residues; that stretch reads DFDEEGMEDMEG.

It belongs to the bacterial histone-like protein family. In terms of assembly, heterodimer of an alpha and a beta chain.

Its function is as follows. This protein is one of the two subunits of integration host factor, a specific DNA-binding protein that functions in genetic recombination as well as in transcriptional and translational control. It is necessary for normal cell growth and the production of carotenoids in response to light. The polypeptide is Integration host factor subunit alpha (ihfA) (Myxococcus xanthus).